The chain runs to 372 residues: Glutamate 5-kinase (372 aa).

K14 contributes to the ATP binding site. Substrate is bound by residues S55, D142, and N154. ATP contacts are provided by residues 174 to 175 (SD) and 216 to 222 (TGGMETK). One can recognise a PUA domain in the interval 279–357 (QGSIIVDLGA…WEIADVLGHK (79 aa)).

It belongs to the glutamate 5-kinase family.

The protein resides in the cytoplasm. It carries out the reaction L-glutamate + ATP = L-glutamyl 5-phosphate + ADP. The protein operates within amino-acid biosynthesis; L-proline biosynthesis; L-glutamate 5-semialdehyde from L-glutamate: step 1/2. Catalyzes the transfer of a phosphate group to glutamate to form L-glutamate 5-phosphate. The protein is Glutamate 5-kinase of Carboxydothermus hydrogenoformans (strain ATCC BAA-161 / DSM 6008 / Z-2901).